The following is a 244-amino-acid chain: 5-oxoprolinase subunit A (244 aa).

It belongs to the LamB/PxpA family. In terms of assembly, forms a complex composed of PxpA, PxpB and PxpC.

The catalysed reaction is 5-oxo-L-proline + ATP + 2 H2O = L-glutamate + ADP + phosphate + H(+). Functionally, catalyzes the cleavage of 5-oxoproline to form L-glutamate coupled to the hydrolysis of ATP to ADP and inorganic phosphate. The polypeptide is 5-oxoprolinase subunit A (Citrobacter koseri (strain ATCC BAA-895 / CDC 4225-83 / SGSC4696)).